Consider the following 224-residue polypeptide: Probable mitochondrial import inner membrane translocase subunit Tim17 4 (224 aa).

3 consecutive transmembrane segments (helical) span residues 16-36 (CGCA…LKGF), 60-80 (AIAG…CVMV), and 115-135 (AFVG…VATI).

This sequence belongs to the Tim17/Tim22/Tim23 family. In terms of assembly, component of the TIM23 complex at least composed of Tim23, Tim17 (Tim17a1, Tim17a2 or Tim17b1) and a Tim50. The complex interacts with the Tim44 component of the PAM complex.

Its subcellular location is the mitochondrion inner membrane. Essential component of the TIM23 complex, a complex that mediates the translocation of transit peptide-containing proteins across the mitochondrial inner membrane. The sequence is that of Probable mitochondrial import inner membrane translocase subunit Tim17 4 (Tim17a2) from Drosophila melanogaster (Fruit fly).